The primary structure comprises 109 residues: MVQVPKTRKTYCKKCNSHTNHKVSQYKKSKESTHAQGRRRYDMKQSGFGGQTKPIFRKKAKTTKKVALKFDCTTCKTKRVIPIKRCKTIVFMDITQIKKAKVNKKDPNW.

The interval 23–53 (VSQYKKSKESTHAQGRRRYDMKQSGFGGQTK) is disordered. The span at 28–43 (KSKESTHAQGRRRYDM) shows a compositional bias: basic and acidic residues.

This sequence belongs to the eukaryotic ribosomal protein eL42 family.

It localises to the cytoplasm. This Tetrahymena thermophila (strain SB210) protein is Large ribosomal subunit protein eL42 (RPL36A).